Consider the following 512-residue polypeptide: PTS system mannitol-specific EIICB component (512 aa).

The Cytoplasmic segment spans residues 1–28; the sequence is MSQTEEKKGIGRRVQAFGSFLSSMIMPN. One can recognise a PTS EIIC type-2 domain in the interval 17–349; the sequence is FGSFLSSMIM…MKFTKEPKQD (333 aa). Residues 29–50 form a helical membrane-spanning segment; sequence IGAFIAWGFIAAIFIDNGWFPN. Over 51-54 the chain is Extracellular; that stretch reads KDLA. The helical transmembrane segment at 55–75 threads the bilayer; it reads TLAGPMITYLIPLLIAFSGGR. Topologically, residues 76–139 are cytoplasmic; sequence LIYDLRGGII…QGFEMLFNNF (64 aa). The chain crosses the membrane as a helical span at residues 140–161; it reads SAGILGFIMTIAGFKILAPLMK. Topologically, residues 162 to 170 are extracellular; that stretch reads FIMHILSVA. A helical membrane pass occupies residues 171–191; sequence VEALVHAHLLPLVSILVEPAK. The Cytoplasmic portion of the chain corresponds to 192–278; it reads IVFLNNAINH…VLMRPLLFIA (87 aa). The helical transmembrane segment at 279-298 threads the bilayer; that stretch reads VILGGMTGVATYQATGFGFK. The Extracellular segment spans residues 299–318; that stretch reads SPASPGSFIVYCLNAPRGEF. The chain crosses the membrane as a helical span at residues 319-340; it reads LHMLLGVFLATLVSFVVAALIM. Residues 341–512 are Cytoplasmic-facing; the sequence is KFTKEPKQDL…LNNLKKDDQA (172 aa). A compositionally biased stretch (low complexity) spans 365–376; sequence SSVASKLVSSDK. The tract at residues 365-401 is disordered; the sequence is SSVASKLVSSDKNVNTEENASGNVSETSSLDDDPEAL. Positions 380–392 are enriched in polar residues; sequence TEENASGNVSETS. In terms of domain architecture, PTS EIIB type-2 spans 419–512; the sequence is NHVIFACDAG…LNNLKKDDQA (94 aa). Cys425 acts as the Phosphocysteine intermediate; for EIIB activity in catalysis. At Cys425 the chain carries Phosphocysteine; by EIIA.

Homodimer.

Its subcellular location is the cell membrane. The catalysed reaction is D-mannitol(out) + N(pros)-phospho-L-histidyl-[protein] = D-mannitol 1-phosphate(in) + L-histidyl-[protein]. Functionally, the phosphoenolpyruvate-dependent sugar phosphotransferase system (sugar PTS), a major carbohydrate active transport system, catalyzes the phosphorylation of incoming sugar substrates concomitantly with their translocation across the cell membrane. The enzyme II CmtAB PTS system is involved in D-mannitol transport. This chain is PTS system mannitol-specific EIICB component (mtlA), found in Staphylococcus aureus (strain MRSA252).